The primary structure comprises 131 residues: Squamosa promoter-binding protein 1 (131 aa).

Positions 1–10 (MDTSKGEGKR) are enriched in basic and acidic residues. A disordered region spans residues 1–52 (MDTSKGEGKRVIKLPGSQEQGEEEDDIGEDSKKTRALTPSGKRASGSTQRSC). An SBP-type zinc finger spans residues 49–126 (QRSCQVENCA…AGHNERRRKS (78 aa)). Residues C52, C57, C74, H77, C93, C96, H100, and C112 each contribute to the Zn(2+) site. Residues 109–125 (KRSCRRRLAGHNERRRK) carry the Bipartite nuclear localization signal motif.

The protein localises to the nucleus. Functionally, probable transcriptional factor. Binds to the promoter of the SQUAMOSA gene. This Antirrhinum majus (Garden snapdragon) protein is Squamosa promoter-binding protein 1 (SBP1).